Reading from the N-terminus, the 922-residue chain is Autophagy-related protein 9B (922 aa).

Disordered regions lie at residues 1-22 (MVRR…DLGP) and 85-144 (TPHN…MGPL). Over 1–206 (MVRRTGWGGS…KIYSYHQRNG (206 aa)) the chain is Cytoplasmic. The span at 85-114 (TPHNVLPTPTTPSTQAHPTMIHTSASPSWG) shows a compositional bias: polar residues. Residues 115 to 124 (SHSTPPLASA) are compositionally biased toward low complexity. The Tyrosine-based sorting signal signature appears at 150 to 153 (YERL). The helical transmembrane segment at 207 to 227 (FACILLEDVFQLGQFIFIVTF) threads the bilayer. At 228 to 275 (TTFLLRCVDYNVLFNNQPKNHTRRGPLHSKVTLSDAILPSAQCAEKIH) the chain is on the lumenal side. Residues 276 to 296 (DSPLLVFLLVLAAGFWLFQLL) form a helical membrane-spanning segment. Over 297–437 (RSVCNLFSYW…GVLANRWRRT (141 aa)) the chain is Cytoplasmic. Residues 438 to 458 (VLLLAAVNLALSPLVLAWQVL) lie within the membrane without spanning it. Over 459–523 (HAFYSHVELL…RAAEPPAPLR (65 aa)) the chain is Cytoplasmic. Residues 524–544 (ALLARQLVFFSGALFAALLVL) form a helical membrane-spanning segment. Residues 545–550 (TIYDED) are Lumenal-facing. A helical membrane pass occupies residues 551-571 (VLAVEHVLTTMTALGVTATVA). Over 572–624 (RSFIPEEQCQGRSSQLLLQAALAHMHYLPEEPGATGARASSYWQMAQLLQYRA) the chain is Cytoplasmic. An intramembrane segment occupies 625–645 (VSLLEELLSPLLTPLFLLFWF). Topologically, residues 646–922 (RPRALEIIDF…QKEPLTGPLH (277 aa)) are cytoplasmic. A disordered region spans residues 848–922 (ELWGEASASS…QKEPLTGPLH (75 aa)). Composition is skewed to low complexity over residues 854–870 (SASS…QPGS) and 877–889 (SWSS…ASSP). Residues 890-899 (RQQWGTQRAQ) are compositionally biased toward polar residues.

This sequence belongs to the ATG9 family. As to quaternary structure, homotrimer; forms a homotrimer with a central pore that forms a path between the two membrane leaflets. Expressed in heart, brain, and placenta and testis.

The protein resides in the preautophagosomal structure membrane. It carries out the reaction a 1,2-diacyl-sn-glycero-3-phosphocholine(in) = a 1,2-diacyl-sn-glycero-3-phosphocholine(out). It catalyses the reaction a 1,2-diacyl-sn-glycero-3-phospho-L-serine(in) = a 1,2-diacyl-sn-glycero-3-phospho-L-serine(out). The catalysed reaction is a 1,2-diacyl-sn-glycero-3-phosphoethanolamine(in) = a 1,2-diacyl-sn-glycero-3-phosphoethanolamine(out). Its function is as follows. Phospholipid scramblase involved in autophagy by mediating autophagosomal membrane expansion. Cycles between the preautophagosomal structure/phagophore assembly site (PAS) and the cytoplasmic vesicle pool and supplies membrane for the growing autophagosome. Lipid scramblase activity plays a key role in preautophagosomal structure/phagophore assembly by distributing the phospholipids that arrive through ATG2 (ATG2A or ATG2B) from the cytoplasmic to the luminal leaflet of the bilayer, thereby driving autophagosomal membrane expansion. In addition to autophagy, also plays a role in necrotic cell death. The chain is Autophagy-related protein 9B from Mus musculus (Mouse).